The following is a 236-amino-acid chain: 15,16-dihydrobiliverdin:ferredoxin oxidoreductase (236 aa).

It belongs to the HY2 family.

The enzyme catalyses 15,16-dihydrobiliverdin + oxidized 2[4Fe-4S]-[ferredoxin] = biliverdin IXalpha + reduced 2[4Fe-4S]-[ferredoxin] + 2 H(+). In terms of biological role, catalyzes the two-electron reduction of biliverdin IX-alpha at the C15 methine bridge. The polypeptide is 15,16-dihydrobiliverdin:ferredoxin oxidoreductase (Prochlorococcus marinus (strain MIT 9515)).